A 545-amino-acid chain; its full sequence is 2-succinyl-5-enolpyruvyl-6-hydroxy-3-cyclohexene-1-carboxylate synthase (545 aa).

The protein belongs to the TPP enzyme family. MenD subfamily. In terms of assembly, homodimer. The cofactor is Mg(2+). It depends on Mn(2+) as a cofactor. Thiamine diphosphate is required as a cofactor.

The enzyme catalyses isochorismate + 2-oxoglutarate + H(+) = 5-enolpyruvoyl-6-hydroxy-2-succinyl-cyclohex-3-ene-1-carboxylate + CO2. Its pathway is quinol/quinone metabolism; 1,4-dihydroxy-2-naphthoate biosynthesis; 1,4-dihydroxy-2-naphthoate from chorismate: step 2/7. The protein operates within quinol/quinone metabolism; menaquinone biosynthesis. In terms of biological role, catalyzes the thiamine diphosphate-dependent decarboxylation of 2-oxoglutarate and the subsequent addition of the resulting succinic semialdehyde-thiamine pyrophosphate anion to isochorismate to yield 2-succinyl-5-enolpyruvyl-6-hydroxy-3-cyclohexene-1-carboxylate (SEPHCHC). In Nocardia farcinica (strain IFM 10152), this protein is 2-succinyl-5-enolpyruvyl-6-hydroxy-3-cyclohexene-1-carboxylate synthase.